The chain runs to 605 residues: Elongation factor 4 (605 aa).

The tr-type G domain occupies 4–186; the sequence is SATRNFCIIA…AIVARVPAPK (183 aa). Residues 16–21 and 133–136 contribute to the GTP site; these read DHGKST and NKID.

It belongs to the TRAFAC class translation factor GTPase superfamily. Classic translation factor GTPase family. LepA subfamily.

Its subcellular location is the cell membrane. It carries out the reaction GTP + H2O = GDP + phosphate + H(+). In terms of biological role, required for accurate and efficient protein synthesis under certain stress conditions. May act as a fidelity factor of the translation reaction, by catalyzing a one-codon backward translocation of tRNAs on improperly translocated ribosomes. Back-translocation proceeds from a post-translocation (POST) complex to a pre-translocation (PRE) complex, thus giving elongation factor G a second chance to translocate the tRNAs correctly. Binds to ribosomes in a GTP-dependent manner. This chain is Elongation factor 4, found in Dehalococcoides mccartyi (strain ATCC BAA-2266 / KCTC 15142 / 195) (Dehalococcoides ethenogenes (strain 195)).